Consider the following 379-residue polypeptide: L-lactate dehydrogenase (379 aa).

An FMN hydroxy acid dehydrogenase domain is found at M1–P379. Y24 is a binding site for substrate. FMN is bound by residues S106 and Q127. Y129 provides a ligand contact to substrate. Position 155 (T155) interacts with FMN. Residue R164 coordinates substrate. K251 is an FMN binding site. Residue H275 is the Proton acceptor of the active site. R278 is a binding site for substrate. D306–R330 is a binding site for FMN.

It belongs to the FMN-dependent alpha-hydroxy acid dehydrogenase family. It depends on FMN as a cofactor.

Its subcellular location is the cell inner membrane. The enzyme catalyses (S)-lactate + A = pyruvate + AH2. Catalyzes the conversion of L-lactate to pyruvate. Is coupled to the respiratory chain. In Stenotrophomonas maltophilia (strain R551-3), this protein is L-lactate dehydrogenase.